The sequence spans 459 residues: Putrescine aminotransferase (459 aa).

Pyridoxal 5'-phosphate contacts are provided by residues 150 to 151 (GT) and glutamine 274. An N6-(pyridoxal phosphate)lysine modification is found at lysine 300. Residue threonine 332 coordinates pyridoxal 5'-phosphate.

The protein belongs to the class-III pyridoxal-phosphate-dependent aminotransferase family. Putrescine aminotransferase subfamily. Requires pyridoxal 5'-phosphate as cofactor.

The catalysed reaction is an alkane-alpha,omega-diamine + 2-oxoglutarate = an omega-aminoaldehyde + L-glutamate. The enzyme catalyses putrescine + 2-oxoglutarate = 1-pyrroline + L-glutamate + H2O. It carries out the reaction cadaverine + 2-oxoglutarate = 5-aminopentanal + L-glutamate. It functions in the pathway amine and polyamine degradation; putrescine degradation; 4-aminobutanal from putrescine (transaminase route): step 1/1. In terms of biological role, catalyzes the aminotransferase reaction from putrescine to 2-oxoglutarate, leading to glutamate and 4-aminobutanal, which spontaneously cyclizes to form 1-pyrroline. This is the first step in one of two pathways for putrescine degradation, where putrescine is converted into 4-aminobutanoate (gamma-aminobutyrate or GABA) via 4-aminobutanal. Also functions as a cadaverine transaminase in a a L-lysine degradation pathway to succinate that proceeds via cadaverine, glutarate and L-2-hydroxyglutarate. The protein is Putrescine aminotransferase of Escherichia coli O7:K1 (strain IAI39 / ExPEC).